The sequence spans 1263 residues: DNA-directed RNA polymerase subunit beta (1263 aa).

Belongs to the RNA polymerase beta chain family. The RNAP catalytic core consists of 2 alpha, 1 beta, 1 beta' and 1 omega subunit. When a sigma factor is associated with the core the holoenzyme is formed, which can initiate transcription.

The catalysed reaction is RNA(n) + a ribonucleoside 5'-triphosphate = RNA(n+1) + diphosphate. Functionally, DNA-dependent RNA polymerase catalyzes the transcription of DNA into RNA using the four ribonucleoside triphosphates as substrates. This chain is DNA-directed RNA polymerase subunit beta, found in Thermotoga sp. (strain RQ2).